The following is a 283-amino-acid chain: MTKLITTVKEMQHIVKAAKRSGTTIGLIPTMGALHDGHLTMVRESVSTNDITVVSVFVNPLQFGPNEDFDAYPRQIDKDLELVSEVGADIVFHPAVEDMYPGELGIDVKVGPLADVLEGAKRPGHFDGVVTVVNKLFNIVMPDYAYFGKKDAQQLAIVEQMVKDFNHAVEIIGIDIVREADGLAKSSRNVYLTEQERQEAVHLSKSLLLAQALYQDGERQSKVIIDRVTQYLESHISGRIEEVAVYSYPQLVEQHEITGRIFISLAVKFSKARLIDNIIIGAE.

31–38 (MGALHDGH) contributes to the ATP binding site. Residue histidine 38 is the Proton donor of the active site. Glutamine 62 is a (R)-pantoate binding site. Position 62 (glutamine 62) interacts with beta-alanine. 148 to 151 (GKKD) contributes to the ATP binding site. Glutamine 154 lines the (R)-pantoate pocket. ATP contacts are provided by residues valine 177 and 185 to 188 (KSSR).

The protein belongs to the pantothenate synthetase family. In terms of assembly, homodimer.

Its subcellular location is the cytoplasm. The enzyme catalyses (R)-pantoate + beta-alanine + ATP = (R)-pantothenate + AMP + diphosphate + H(+). It functions in the pathway cofactor biosynthesis; (R)-pantothenate biosynthesis; (R)-pantothenate from (R)-pantoate and beta-alanine: step 1/1. In terms of biological role, catalyzes the condensation of pantoate with beta-alanine in an ATP-dependent reaction via a pantoyl-adenylate intermediate. This Staphylococcus aureus (strain bovine RF122 / ET3-1) protein is Pantothenate synthetase.